Consider the following 464-residue polypeptide: Argininosuccinate lyase (464 aa).

This sequence belongs to the lyase 1 family. Argininosuccinate lyase subfamily.

Its subcellular location is the cytoplasm. It catalyses the reaction 2-(N(omega)-L-arginino)succinate = fumarate + L-arginine. Its pathway is amino-acid biosynthesis; L-arginine biosynthesis; L-arginine from L-ornithine and carbamoyl phosphate: step 3/3. The chain is Argininosuccinate lyase from Pseudomonas putida (strain GB-1).